A 190-amino-acid polypeptide reads, in one-letter code: Probable chorismate pyruvate-lyase (190 aa).

Residues arginine 77, leucine 115, and glutamate 174 each coordinate substrate.

The protein belongs to the UbiC family.

It localises to the cytoplasm. The catalysed reaction is chorismate = 4-hydroxybenzoate + pyruvate. Its pathway is cofactor biosynthesis; ubiquinone biosynthesis. Removes the pyruvyl group from chorismate, with concomitant aromatization of the ring, to provide 4-hydroxybenzoate (4HB) for the ubiquinone pathway. In Shewanella sp. (strain MR-4), this protein is Probable chorismate pyruvate-lyase.